A 1955-amino-acid chain; its full sequence is Rootletin (1955 aa).

5 coiled-coil regions span residues 29 to 58 (EENR…ESIE), 162 to 223 (EENL…QQHT), 284 to 1303 (LMRK…AVES), 1368 to 1579 (VGVT…EELR), and 1607 to 1863 (RRWE…RTKG). 5 disordered regions span residues 321-341 (VTEN…DLKR), 391-451 (LTTK…KKLD), 504-551 (LKER…RSLK), 907-935 (EKLN…NEAV), and 961-998 (RDLE…QKTL). 2 stretches are compositionally biased toward basic and acidic residues: residues 326–341 (MKSE…DLKR) and 396–451 (GEID…KKLD). 3 stretches are compositionally biased toward basic and acidic residues: residues 907–931 (EKLN…ESSK), 961–982 (RDLE…KMEL), and 989–998 (EDRKKEQKTL).

It belongs to the rootletin family. As to expression, expressed in head ciliated neurons.

It is found in the cytoplasm. The protein resides in the cytoskeleton. The protein localises to the cilium basal body. Its subcellular location is the cilium axoneme. Its function is as follows. Major structural component of the ciliary rootlet, a cytoskeletal-like structure in ciliated cells which originates from the basal body at the proximal end of a cilium and extends proximally toward the cell nucleus. Required for cilia integrity and function in sensory neurons. Maintains cilia integrity, partly by modulating the assembly and transport of intraflagellar proteins along the ciliary axoneme. Required for normal mating behavior and normal responses to environmental and chemical stimuli. The sequence is that of Rootletin from Caenorhabditis elegans.